A 198-amino-acid chain; its full sequence is dTTP/UTP pyrophosphatase (198 aa).

Catalysis depends on aspartate 75, which acts as the Proton acceptor.

The protein belongs to the Maf family. YhdE subfamily. A divalent metal cation serves as cofactor.

It localises to the cytoplasm. The catalysed reaction is dTTP + H2O = dTMP + diphosphate + H(+). It carries out the reaction UTP + H2O = UMP + diphosphate + H(+). Functionally, nucleoside triphosphate pyrophosphatase that hydrolyzes dTTP and UTP. May have a dual role in cell division arrest and in preventing the incorporation of modified nucleotides into cellular nucleic acids. This is dTTP/UTP pyrophosphatase from Wolbachia sp. subsp. Brugia malayi (strain TRS).